The following is a 329-amino-acid chain: DNA-directed RNA polymerase subunit alpha (329 aa).

The interval Met1 to Lys232 is alpha N-terminal domain (alpha-NTD). An alpha C-terminal domain (alpha-CTD) region spans residues Phe246 to Ala329.

Belongs to the RNA polymerase alpha chain family. Homodimer. The RNAP catalytic core consists of 2 alpha, 1 beta, 1 beta' and 1 omega subunit. When a sigma factor is associated with the core the holoenzyme is formed, which can initiate transcription.

It carries out the reaction RNA(n) + a ribonucleoside 5'-triphosphate = RNA(n+1) + diphosphate. Functionally, DNA-dependent RNA polymerase catalyzes the transcription of DNA into RNA using the four ribonucleoside triphosphates as substrates. The polypeptide is DNA-directed RNA polymerase subunit alpha (Hydrogenovibrio crunogenus (strain DSM 25203 / XCL-2) (Thiomicrospira crunogena)).